An 824-amino-acid chain; its full sequence is Leucine--tRNA ligase (824 aa).

The 'HIGH' region signature appears at 42-52 (PYPSGKIHMGH). Residues 581-585 (KMSKS) carry the 'KMSKS' region motif. Residue lysine 584 coordinates ATP.

It belongs to the class-I aminoacyl-tRNA synthetase family.

The protein resides in the cytoplasm. The catalysed reaction is tRNA(Leu) + L-leucine + ATP = L-leucyl-tRNA(Leu) + AMP + diphosphate. In Citrifermentans bemidjiense (strain ATCC BAA-1014 / DSM 16622 / JCM 12645 / Bem) (Geobacter bemidjiensis), this protein is Leucine--tRNA ligase.